Consider the following 204-residue polypeptide: Large ribosomal subunit protein bL25 (204 aa).

The protein belongs to the bacterial ribosomal protein bL25 family. CTC subfamily. As to quaternary structure, part of the 50S ribosomal subunit; part of the 5S rRNA/L5/L18/L25 subcomplex. Contacts the 5S rRNA. Binds to the 5S rRNA independently of L5 and L18.

This is one of the proteins that binds to the 5S RNA in the ribosome where it forms part of the central protuberance. The chain is Large ribosomal subunit protein bL25 from Pseudomonas paraeruginosa (strain DSM 24068 / PA7) (Pseudomonas aeruginosa (strain PA7)).